A 71-amino-acid chain; its full sequence is DNA gyrase inhibitor YacG (71 aa).

Zn(2+)-binding residues include Cys-8, Cys-11, Cys-27, and Cys-31. The disordered stretch occupies residues 48-71 (VVEDDDLPPDAPGGESGGASGRLN). Positions 61–71 (GESGGASGRLN) are enriched in gly residues.

This sequence belongs to the DNA gyrase inhibitor YacG family. In terms of assembly, interacts with GyrB. The cofactor is Zn(2+).

Its function is as follows. Inhibits all the catalytic activities of DNA gyrase by preventing its interaction with DNA. Acts by binding directly to the C-terminal domain of GyrB, which probably disrupts DNA binding by the gyrase. The polypeptide is DNA gyrase inhibitor YacG (Ralstonia nicotianae (strain ATCC BAA-1114 / GMI1000) (Ralstonia solanacearum)).